Consider the following 145-residue polypeptide: MTVHNLYLFDRNGVCLHYSEWHRKKQAGIPKEEEYKLMYGMLFSIRSFVSKMSPLDMKDGFLSFQTSRYKLHYYETPTGIKVVMNTDLGVGPIRDVLHHIYSALYVEFVVKNPLCPLGQTVQSELFRSRLDSYVRSLPFFSARAG.

The protein belongs to the TRAPP small subunits family. BET5 subfamily. In terms of assembly, part of the multisubunit transport protein particle (TRAPP) complex. The heterodimer TRAPPC6B-TRAPPC3 interacts with TRAPPC1 likely providing a core for TRAPP complex formation.

It is found in the golgi apparatus. It localises to the cis-Golgi network. Its subcellular location is the endoplasmic reticulum. May play a role in vesicular transport from endoplasmic reticulum to Golgi. This Mus musculus (Mouse) protein is Trafficking protein particle complex subunit 1.